A 268-amino-acid polypeptide reads, in one-letter code: Myeloid leukemia factor 1 (268 aa).

A phosphoserine mark is found at Ser-8, Ser-32, and Ser-34. 2 disordered regions span residues 44–66 (ISDGRGRAHNRRGHNDGEDSLTH) and 209–268 (GRHN…SNKK). The segment at 50-125 (RAHNRRGHND…IGDEPPKVFQ (76 aa)) is interaction with COPS3. 2 stretches are compositionally biased toward basic and acidic residues: residues 56–65 (GHNDGEDSLT) and 226–237 (PGSRELKRREKP).

The protein belongs to the MLF family. Interacts with CENPU. Also interacts with NRBP1/MADM, YWHAZ/14-3-3-zeta and HNRPUL2/MANP. NRBP1 recruits a serine kinase which phosphorylates both itself and MLF1. Phosphorylated MLF1 then binds to YWHAZ and is retained in the cytoplasm. Retained in the nucleus by binding to HNRPUL2. Binds to COPS3/CSN3 which is required for suppression of COP1 and activation of p53. Phosphorylation is required for binding to YWHAZ. As to expression, most abundant in testis, ovary, skeletal muscle, heart, kidney and colon. Low expression in spleen, thymus and peripheral blood leukocytes.

Its subcellular location is the cytoplasm. It localises to the nucleus. The protein resides in the cell projection. It is found in the cilium. The protein localises to the cytoskeleton. Its subcellular location is the cilium basal body. In terms of biological role, involved in lineage commitment of primary hemopoietic progenitors by restricting erythroid formation and enhancing myeloid formation. Interferes with erythropoietin-induced erythroid terminal differentiation by preventing cells from exiting the cell cycle through suppression of CDKN1B/p27Kip1 levels. Suppresses COP1 activity via CSN3 which activates p53 and induces cell cycle arrest. Binds DNA and affects the expression of a number of genes so may function as a transcription factor in the nucleus. The polypeptide is Myeloid leukemia factor 1 (MLF1) (Homo sapiens (Human)).